Consider the following 305-residue polypeptide: Glycine--tRNA ligase alpha subunit (305 aa).

Belongs to the class-II aminoacyl-tRNA synthetase family. As to quaternary structure, tetramer of two alpha and two beta subunits.

Its subcellular location is the cytoplasm. It catalyses the reaction tRNA(Gly) + glycine + ATP = glycyl-tRNA(Gly) + AMP + diphosphate. The polypeptide is Glycine--tRNA ligase alpha subunit (Streptococcus pyogenes serotype M2 (strain MGAS10270)).